Here is a 212-residue protein sequence, read N- to C-terminus: Protein DEPP1 (212 aa).

Disordered regions lie at residues 20-39 (EEML…SLDD), 49-79 (QPTS…GRPA), and 113-176 (QEKQ…SDLR). Residues 113–124 (QEKQPSQRDLPR) are compositionally biased toward basic and acidic residues.

As to expression, expressed in various tissues, including pancreas, placenta, ovary, testis and kidney.

It is found in the cytoplasm. The protein localises to the peroxisome. The protein resides in the mitochondrion. In terms of biological role, acts as a critical modulator of FOXO3-induced autophagy via increased cellular ROS. This is Protein DEPP1 from Homo sapiens (Human).